Consider the following 502-residue polypeptide: uncharacterized protein (502 aa).

2 helical membrane-spanning segments follow: residues 10–30 (NLTL…IXIF) and 473–493 (FSLI…FGLV).

It is found in the cell membrane. This is an uncharacterized protein from Borreliella burgdorferi (strain ATCC 35210 / DSM 4680 / CIP 102532 / B31) (Borrelia burgdorferi).